Consider the following 78-residue polypeptide: Defensin beta 136 (78 aa).

The signal sequence occupies residues 1-21 (MNLCLSALLFFLVILLPSGKG). Cystine bridges form between cysteine 33/cysteine 60, cysteine 40/cysteine 54, and cysteine 44/cysteine 61.

This sequence belongs to the beta-defensin family.

Its subcellular location is the secreted. Host defense peptide that exhibits antibacterial and antifungal activity. Exhibits antimicrobial activity against E.coli, S.aureus and C.albicans (in vitro). Has high lipopolysaccharide (LPS)-binding affinity, and may thereby be involved in immunoregulation through LPS neutralization. This is Defensin beta 136 (DEFB136) from Homo sapiens (Human).